The sequence spans 666 residues: Probable potassium transport system protein Kup (666 aa).

The next 12 membrane-spanning stretches (helical) occupy residues 16 to 36, 58 to 78, 99 to 119, 141 to 161, 167 to 187, 221 to 241, 253 to 273, 292 to 312, 343 to 363, 373 to 393, 402 to 422, and 424 to 444; these read GFII…LYTM, ISLI…LVAL, TPWL…DGAL, IFQN…LLFA, TGVI…FLGI, IFIL…YSDL, WPFV…WILA, FTMH…QALI, TYIP…VLLF, YGLA…FFLI, VLLM…ASAV, and FMHG…IMTI.

Belongs to the HAK/KUP transporter (TC 2.A.72) family.

The protein localises to the cell membrane. It catalyses the reaction K(+)(in) + H(+)(in) = K(+)(out) + H(+)(out). In terms of biological role, transport of potassium into the cell. Likely operates as a K(+):H(+) symporter. In Streptococcus agalactiae serotype Ia (strain ATCC 27591 / A909 / CDC SS700), this protein is Probable potassium transport system protein Kup.